The following is a 197-amino-acid chain: MFVSFEGIDGCGKSTQVNLLVNYLEEKGIPYIKVREPGGTHLGEKIRELLITQEMCARSELLLFLASRAQLVESVIKPALKNGKIVIADRFAHSSVAYQGCGRELGPETVKILNDFATDKTYPDIVFYIDVPVNVAMERMKNQHKDRIEKEGKEFWESIRNCYLKMAKENENFVIIDGTRTIEEIHREIVKVFNAYL.

7–14 (GIDGCGKS) lines the ATP pocket.

It belongs to the thymidylate kinase family.

The enzyme catalyses dTMP + ATP = dTDP + ADP. Functionally, phosphorylation of dTMP to form dTDP in both de novo and salvage pathways of dTTP synthesis. In Fervidobacterium nodosum (strain ATCC 35602 / DSM 5306 / Rt17-B1), this protein is Thymidylate kinase.